A 169-amino-acid chain; its full sequence is S-ribosylhomocysteine lyase (169 aa).

Positions 54, 58, and 128 each coordinate Fe cation.

This sequence belongs to the LuxS family. In terms of assembly, homodimer. Fe cation serves as cofactor.

It carries out the reaction S-(5-deoxy-D-ribos-5-yl)-L-homocysteine = (S)-4,5-dihydroxypentane-2,3-dione + L-homocysteine. Involved in the synthesis of autoinducer 2 (AI-2) which is secreted by bacteria and is used to communicate both the cell density and the metabolic potential of the environment. The regulation of gene expression in response to changes in cell density is called quorum sensing. Catalyzes the transformation of S-ribosylhomocysteine (RHC) to homocysteine (HC) and 4,5-dihydroxy-2,3-pentadione (DPD). This Shewanella frigidimarina (strain NCIMB 400) protein is S-ribosylhomocysteine lyase.